Reading from the N-terminus, the 354-residue chain is Uptake hydrogenase small subunit (354 aa).

A signal peptide (tat-type signal) is located at residues 1–44; the sequence is MSQLETXYDVMRRQGITRRSFLKYCSLTGRPCLGPTFAPQIAHA. The [4Fe-4S] cluster site is built by C61, C64, C156, C190, H228, S231, C256, and C262. 3 residues coordinate [3Fe-4S] cluster: C271, C290, and C293.

This sequence belongs to the [NiFe]/[NiFeSe] hydrogenase small subunit family. As to quaternary structure, heterodimer of a large and a small subunit. The cofactor is [4Fe-4S] cluster. [3Fe-4S] cluster is required as a cofactor. Predicted to be exported by the Tat system. The position of the signal peptide cleavage has not been experimentally proven.

The protein resides in the cell membrane. The enzyme catalyses H2 + A = AH2. Functionally, this enzyme recycles the H(2) produced by nitrogenase to increase the production of ATP and to protect nitrogenase against inhibition or damage by O(2) under carbon- or phosphate-limited conditions. The protein is Uptake hydrogenase small subunit (hupA) of Azotobacter chroococcum mcd 1.